Here is a 396-residue protein sequence, read N- to C-terminus: L-lactate dehydrogenase (396 aa).

Residues 1–380 (MIISAASDYR…TQDSLVQELS (380 aa)) form the FMN hydroxy acid dehydrogenase domain. Substrate is bound at residue Tyr24. Ser106 and Gln127 together coordinate FMN. Tyr129 contacts substrate. FMN is bound at residue Thr155. Arg164 is a binding site for substrate. Lys251 serves as a coordination point for FMN. Residue His275 is the Proton acceptor of the active site. Arg278 lines the substrate pocket. 306-330 (DSGIRNGLDVVRMIALGADTVLLGR) lines the FMN pocket.

It belongs to the FMN-dependent alpha-hydroxy acid dehydrogenase family. Requires FMN as cofactor.

It localises to the cell inner membrane. It carries out the reaction (S)-lactate + A = pyruvate + AH2. In terms of biological role, catalyzes the conversion of L-lactate to pyruvate. Is coupled to the respiratory chain. In Escherichia coli (strain SMS-3-5 / SECEC), this protein is L-lactate dehydrogenase.